A 381-amino-acid polypeptide reads, in one-letter code: CD2 homolog (381 aa).

A signal peptide spans 1–16 (MIIKLIFLICFKIVLS). The Extracellular segment spans residues 17 to 208 (INYWVRYNDT…QNYFLENIHT (192 aa)). N-linked (GlcNAc...) asparagine; by host glycans are attached at residues asparagine 24, asparagine 73, asparagine 77, asparagine 85, asparagine 91, asparagine 104, asparagine 121, asparagine 133, asparagine 144, asparagine 176, asparagine 183, and asparagine 189. Disulfide bonds link cysteine 122/cysteine 190 and cysteine 129/cysteine 173. The chain crosses the membrane as a helical span at residues 209-229 (LFYMIIFIVSGITISIFISII). Residues 230 to 381 (TFLSLRKRKK…ISLIHVDRII (152 aa)) are Cytoplasmic-facing. The segment at 243–278 (EIESPPPESNEEEQCQHDDTTSIHEPSPREPLLPKP) is disordered. The span at 256 to 270 (QCQHDDTTSIHEPSP) shows a compositional bias: basic and acidic residues. Tandem repeats lie at residues 305–310 (KPCPPP), 311–316 (KPCPPP), 317–322 (KPCPPP), 323–328 (KPCPPP), 329–334 (KPCPPP), 335–340 (KPCPPP), and 341–346 (KPCPPP). A 7 X 6 AA tandem repeats of K-[LP]-C-[PRS]-[PS]-[PS] region spans residues 305-334 (KPCPPPKPCPPPKPCPPPKPCPPPKPCPPP). The tract at residues 341–362 (KPCPPPESYSPPKPLPSIPLLP) is disordered.

This sequence belongs to the asfivirus CD2 homolog protein family. Both glycosylated and nonglycosylated forms interact (via C-terminus) with the host AP-1 complex. Cleaved into two fragments of 63 kDa and 26 kDa containing respectively the glycosylated N-terminus and the nonglycosylated C-terminus. A full-length 89-kDa glycosylated form also exists.

Its subcellular location is the host membrane. It localises to the virion membrane. It is found in the host Golgi apparatus. Its function is as follows. May play an immunosuppressive role by inhibiting lymphocyte proliferation and subsequently facilitating viral replication and generalization of infection. Responsible for viral hemadsorption, which may help viral spread. Increases virus replication in the tick vector at the step of virus uptake or replication in the tick gut. May play a role in the host Golgi reorganization to yield viral factories. May play a role in host cell penetration. The polypeptide is CD2 homolog (African swine fever virus (isolate Warthog/Namibia/Wart80/1980) (ASFV)).